Here is a 1433-residue protein sequence, read N- to C-terminus: Probable ATP-dependent RNA helicase spindle-E (1433 aa).

The Helicase ATP-binding domain occupies 126-294 (INAINENPVV…FANERSAPPV (169 aa)). 139-146 (GETGCGKT) is an ATP binding site. Positions 240-243 (DEVH) match the DEAH box motif. The Helicase C-terminal domain occupies 355–526 (TGKSYNQSLR…NCVLKAKELK (172 aa)). The Tudor domain maps to 935–998 (AGAITKGLML…RLMSQDLLRH (64 aa)).

The protein belongs to the DEAD box helicase family. DEAH subfamily.

Its subcellular location is the cytoplasm. The catalysed reaction is ATP + H2O = ADP + phosphate + H(+). In terms of biological role, probable ATP-binding RNA helicase which plays a central role during spermatogenesis and oogenesis by repressing transposable elements and preventing their mobilization, which is essential for the germline integrity. Acts via the piRNA metabolic process, which mediates the repression of transposable elements during meiosis by forming complexes composed of piRNAs and Piwi and govern the methylation and subsequent repression of transposons. Involved in the repression of LTR retrotransposon copia. Also involved in telomere regulation by repressing specialized telomeric retroelements HeT-A, TAHRE, and TART; Drosophila telomeres being maintained by transposition of specialized telomeric retroelements. Involved in telomeric trans-silencing, a repression mechanism by which a transposon or a transgene inserted in subtelomeric heterochromatin has the capacity to repress in trans in the female germline, a homologous transposon, or transgene located in euchromatin. Involved in the repression of testis-expressed Stellate genes by the homologous Su(Ste) repeats. Required for anteroposterior and dorsoventral axis formation during oogenesis. This chain is Probable ATP-dependent RNA helicase spindle-E (spn-E), found in Drosophila pseudoobscura pseudoobscura (Fruit fly).